Here is a 383-residue protein sequence, read N- to C-terminus: ATP phosphoribosyltransferase regulatory subunit (383 aa).

It belongs to the class-II aminoacyl-tRNA synthetase family. HisZ subfamily. As to quaternary structure, heteromultimer composed of HisG and HisZ subunits.

It is found in the cytoplasm. The protein operates within amino-acid biosynthesis; L-histidine biosynthesis; L-histidine from 5-phospho-alpha-D-ribose 1-diphosphate: step 1/9. Required for the first step of histidine biosynthesis. May allow the feedback regulation of ATP phosphoribosyltransferase activity by histidine. The protein is ATP phosphoribosyltransferase regulatory subunit of Paraburkholderia phymatum (strain DSM 17167 / CIP 108236 / LMG 21445 / STM815) (Burkholderia phymatum).